Here is a 96-residue protein sequence, read N- to C-terminus: MEQAPEDQGPQREPYNEWTLELLEELKSEAVRHFPRIWLHSLEQYIYETYGDTWEGVEAIIRILQQLLFIHFRIGCQHSRIGITRQRRARNGASRS.

Positions 1–42 (MEQAPEDQGPQREPYNEWTLELLEELKSEAVRHFPRIWLHSL) are homooligomerization. Ser79, Ser94, and Ser96 each carry phosphoserine; by host.

Belongs to the HIV-1 VPR protein family. As to quaternary structure, homooligomer, may form homodimer. Interacts with p6-gag region of the Pr55 Gag precursor protein through a (Leu-X-X)4 motif near the C-terminus of the P6gag protein. Interacts with host UNG. May interact with host RAD23A/HHR23A. Interacts with host VPRBP/DCAF1, leading to hijack the CUL4A-RBX1-DDB1-DCAF1/VPRBP complex, mediating ubiquitination of host proteins such as TERT and ZGPAT and arrest of the cell cycle in G2 phase. Post-translationally, phosphorylated on several residues by host. These phosphorylations regulate VPR activity for the nuclear import of the HIV-1 pre-integration complex.

The protein resides in the virion. It localises to the host nucleus. It is found in the host extracellular space. During virus replication, may deplete host UNG protein, and incude G2-M cell cycle arrest. Acts by targeting specific host proteins for degradation by the 26S proteasome, through association with the cellular CUL4A-DDB1 E3 ligase complex by direct interaction with host VPRPB/DCAF-1. Cell cycle arrest reportedly occurs within hours of infection and is not blocked by antiviral agents, suggesting that it is initiated by the VPR carried into the virion. Additionally, VPR induces apoptosis in a cell cycle dependent manner suggesting that these two effects are mechanistically linked. Detected in the serum and cerebrospinal fluid of AIDS patient, VPR may also induce cell death to bystander cells. Its function is as follows. During virus entry, plays a role in the transport of the viral pre-integration (PIC) complex to the host nucleus. This function is crucial for viral infection of non-dividing macrophages. May act directly at the nuclear pore complex, by binding nucleoporins phenylalanine-glycine (FG)-repeat regions. The chain is Protein Vpr from Homo sapiens (Human).